The sequence spans 274 residues: NAD kinase (274 aa).

Aspartate 59 functions as the Proton acceptor in the catalytic mechanism. Residues 59-60 (DG), 133-134 (ND), arginine 144, aspartate 163, 174-179 (TAYALS), and glutamine 233 each bind NAD(+).

It belongs to the NAD kinase family. A divalent metal cation is required as a cofactor.

The protein localises to the cytoplasm. The enzyme catalyses NAD(+) + ATP = ADP + NADP(+) + H(+). In terms of biological role, involved in the regulation of the intracellular balance of NAD and NADP, and is a key enzyme in the biosynthesis of NADP. Catalyzes specifically the phosphorylation on 2'-hydroxyl of the adenosine moiety of NAD to yield NADP. The sequence is that of NAD kinase from Aquifex aeolicus (strain VF5).